Consider the following 472-residue polypeptide: MTQETALLSTSPEGGDLNVPARKVFVKTYGCQMNVYDSDRMSDALSRDGYVATDVLEDADFVLLNTCHIREKAAEKVYSELGRLRELKKAKALEGREMLIGVAGCVAQAEGDEILRRVPAVDLVIGPQTYHRLPDALKRARAGQRIVETEYAIEDKFVHLPAPDKAKTRARGVTAFLTVQEGCDKFCTFCVVPYTRGSEVSRPVAQIVAEAEKLVEGGVREITLLGQNVNAWHGEGPHGREWSLGDLLRRLGEIDGLARLRYTTSHPRDMDDSLIEAHRSMAKLMPYLHLPVQSGSDRILKAMNRRHTAAEYLALVERIRAAQPDLALSGDFIVGFPGETDQDFEDTLRLVEEVNYAQAFSFKYSTRPGTPGAELKEQVPEDVKAKRLEILQALLVKQQRGFAEACVGREIDLLLEKPGRMPGQLVGRSPWLQPVNVDAKASQIGDIIRVRITKAGPNSLFAEMIGESDARS.

One can recognise an MTTase N-terminal domain in the interval 22 to 142 (RKVFVKTYGC…LPDALKRARA (121 aa)). [4Fe-4S] cluster-binding residues include cysteine 31, cysteine 67, cysteine 105, cysteine 183, cysteine 187, and cysteine 190. One can recognise a Radical SAM core domain in the interval 169-403 (RARGVTAFLT…LLVKQQRGFA (235 aa)). Positions 404–466 (EACVGREIDL…PNSLFAEMIG (63 aa)) constitute a TRAM domain.

Belongs to the methylthiotransferase family. MiaB subfamily. In terms of assembly, monomer. Requires [4Fe-4S] cluster as cofactor.

It is found in the cytoplasm. The catalysed reaction is N(6)-dimethylallyladenosine(37) in tRNA + (sulfur carrier)-SH + AH2 + 2 S-adenosyl-L-methionine = 2-methylsulfanyl-N(6)-dimethylallyladenosine(37) in tRNA + (sulfur carrier)-H + 5'-deoxyadenosine + L-methionine + A + S-adenosyl-L-homocysteine + 2 H(+). Functionally, catalyzes the methylthiolation of N6-(dimethylallyl)adenosine (i(6)A), leading to the formation of 2-methylthio-N6-(dimethylallyl)adenosine (ms(2)i(6)A) at position 37 in tRNAs that read codons beginning with uridine. This is tRNA-2-methylthio-N(6)-dimethylallyladenosine synthase from Rhizobium meliloti (strain 1021) (Ensifer meliloti).